Reading from the N-terminus, the 690-residue chain is Protein hook (690 aa).

Residues 6–122 (MEIYESLIRW…RLLQLILGCA (117 aa)) form the Calponin-homology (CH) domain. Coiled coils occupy residues 134–515 (QIME…HHAE) and 546–577 (ETTQ…QAAD).

The protein belongs to the hook family. Homodimer. Interacts with microtubules via its N-terminus.

Its subcellular location is the cytoplasm. The protein resides in the cytoskeleton. It is found in the endosome. Its function is as follows. Involved in endocytic trafficking. Probably acts as a cytoskeletal linker protein that tethers endosome vesicles to the cytoskeleton. The protein is Protein hook of Anopheles gambiae (African malaria mosquito).